The primary structure comprises 250 residues: Probable ABC transporter permease protein BAB2_1148 (250 aa).

The next 6 helical transmembrane spans lie at 12 to 32, 63 to 83, 94 to 114, 122 to 142, 172 to 192, and 211 to 231; these read LLSF…GAVV, VLSG…LMGW, WVQF…IVTL, IFVI…QGVI, VPFI…TVVA, and LYYD…LGLF. One can recognise an ABC transmembrane type-1 domain in the interval 56-236; the sequence is IFASLRRVLS…ILGLFMDRLL (181 aa).

Belongs to the binding-protein-dependent transport system permease family. The complex is composed of two ATP-binding proteins (BAB2_1147), two transmembrane proteins (BAB2_1148) and a solute-binding protein (BAB2_1146).

The protein resides in the cell inner membrane. Its function is as follows. Probably part of an ABC transporter complex. Probably responsible for the translocation of the substrate across the membrane. The protein is Probable ABC transporter permease protein BAB2_1148 of Brucella abortus (strain 2308).